A 399-amino-acid polypeptide reads, in one-letter code: Putative 8-amino-7-oxononanoate synthase (399 aa).

Arginine 24 contributes to the substrate binding site. 111–112 (GW) provides a ligand contact to pyridoxal 5'-phosphate. Substrate is bound at residue histidine 141. Residues serine 189, 214 to 217 (DEAH), and 243 to 246 (TFSK) contribute to the pyridoxal 5'-phosphate site. Residue lysine 246 is modified to N6-(pyridoxal phosphate)lysine. A substrate-binding site is contributed by threonine 360.

The protein belongs to the class-II pyridoxal-phosphate-dependent aminotransferase family. BioF subfamily. In terms of assembly, homodimer. Pyridoxal 5'-phosphate serves as cofactor.

The enzyme catalyses 6-carboxyhexanoyl-[ACP] + L-alanine + H(+) = (8S)-8-amino-7-oxononanoate + holo-[ACP] + CO2. It functions in the pathway cofactor biosynthesis; biotin biosynthesis. Catalyzes the decarboxylative condensation of pimeloyl-[acyl-carrier protein] and L-alanine to produce 8-amino-7-oxononanoate (AON), [acyl-carrier protein], and carbon dioxide. This Bordetella bronchiseptica (strain ATCC BAA-588 / NCTC 13252 / RB50) (Alcaligenes bronchisepticus) protein is Putative 8-amino-7-oxononanoate synthase (bioF).